Consider the following 334-residue polypeptide: Tryptophan--tRNA ligase (334 aa).

Residues 12–14 and 20–21 contribute to the ATP site; these read QPS and GN. A 'HIGH' region motif is present at residues 13-21; that stretch reads PSGIPTLGN. D136 contributes to the L-tryptophan binding site. Residues 148 to 150, I187, and 196 to 200 contribute to the ATP site; these read GKD and KMSKS. The short motif at 196-200 is the 'KMSKS' region element; it reads KMSKS.

This sequence belongs to the class-I aminoacyl-tRNA synthetase family. In terms of assembly, homodimer.

The protein resides in the cytoplasm. The enzyme catalyses tRNA(Trp) + L-tryptophan + ATP = L-tryptophyl-tRNA(Trp) + AMP + diphosphate + H(+). In terms of biological role, catalyzes the attachment of tryptophan to tRNA(Trp). This is Tryptophan--tRNA ligase from Wigglesworthia glossinidia brevipalpis.